The following is a 344-amino-acid chain: Heat-inducible transcription repressor HrcA (344 aa).

Belongs to the HrcA family.

Negative regulator of class I heat shock genes (grpE-dnaK-dnaJ and groELS operons). Prevents heat-shock induction of these operons. In Streptococcus uberis (strain ATCC BAA-854 / 0140J), this protein is Heat-inducible transcription repressor HrcA.